Consider the following 206-residue polypeptide: Dephospho-CoA kinase (206 aa).

The 197-residue stretch at 4 to 200 (IVALTGGIGS…HRYLKLATAA (197 aa)) folds into the DPCK domain. 12 to 17 (GSGKST) contacts ATP.

The protein belongs to the CoaE family.

The protein localises to the cytoplasm. It carries out the reaction 3'-dephospho-CoA + ATP = ADP + CoA + H(+). Its pathway is cofactor biosynthesis; coenzyme A biosynthesis; CoA from (R)-pantothenate: step 5/5. Catalyzes the phosphorylation of the 3'-hydroxyl group of dephosphocoenzyme A to form coenzyme A. This is Dephospho-CoA kinase from Yersinia pestis.